The primary structure comprises 182 residues: Protein Syd (182 aa).

It belongs to the Syd family.

The protein resides in the cell inner membrane. In terms of biological role, interacts with the SecY protein in vivo. May bind preferentially to an uncomplexed state of SecY, thus functioning either as a chelating agent for excess SecY in the cell or as a regulatory factor that negatively controls the translocase function. This chain is Protein Syd, found in Pectobacterium atrosepticum (strain SCRI 1043 / ATCC BAA-672) (Erwinia carotovora subsp. atroseptica).